A 79-amino-acid polypeptide reads, in one-letter code: D-alanyl carrier protein (79 aa).

The 77-residue stretch at 1 to 77 folds into the Carrier domain; sequence MDIKSEVLKI…KIIEGITELR (77 aa). Serine 35 is modified (O-(pantetheine 4'-phosphoryl)serine).

Belongs to the DltC family. Post-translationally, 4'-phosphopantetheine is transferred from CoA to a specific serine of apo-DCP.

The protein localises to the cytoplasm. Its pathway is cell wall biogenesis; lipoteichoic acid biosynthesis. In terms of biological role, carrier protein involved in the D-alanylation of lipoteichoic acid (LTA). The loading of thioester-linked D-alanine onto DltC is catalyzed by D-alanine--D-alanyl carrier protein ligase DltA. The DltC-carried D-alanyl group is further transferred to cell membrane phosphatidylglycerol (PG) by forming an ester bond, probably catalyzed by DltD. D-alanylation of LTA plays an important role in modulating the properties of the cell wall in Gram-positive bacteria, influencing the net charge of the cell wall. This is D-alanyl carrier protein from Streptococcus mutans serotype c (strain ATCC 700610 / UA159).